We begin with the raw amino-acid sequence, 156 residues long: 6,7-dimethyl-8-ribityllumazine synthase (156 aa).

5-amino-6-(D-ribitylamino)uracil-binding positions include Phe22, 56-58 (ALE), and 80-82 (AVI). Residue 85-86 (DT) participates in (2S)-2-hydroxy-3-oxobutyl phosphate binding. His88 (proton donor) is an active-site residue. Phe113 provides a ligand contact to 5-amino-6-(D-ribitylamino)uracil. A (2S)-2-hydroxy-3-oxobutyl phosphate-binding site is contributed by Arg127.

The protein belongs to the DMRL synthase family.

The enzyme catalyses (2S)-2-hydroxy-3-oxobutyl phosphate + 5-amino-6-(D-ribitylamino)uracil = 6,7-dimethyl-8-(1-D-ribityl)lumazine + phosphate + 2 H2O + H(+). It functions in the pathway cofactor biosynthesis; riboflavin biosynthesis; riboflavin from 2-hydroxy-3-oxobutyl phosphate and 5-amino-6-(D-ribitylamino)uracil: step 1/2. Functionally, catalyzes the formation of 6,7-dimethyl-8-ribityllumazine by condensation of 5-amino-6-(D-ribitylamino)uracil with 3,4-dihydroxy-2-butanone 4-phosphate. This is the penultimate step in the biosynthesis of riboflavin. The polypeptide is 6,7-dimethyl-8-ribityllumazine synthase (Leuconostoc mesenteroides subsp. mesenteroides (strain ATCC 8293 / DSM 20343 / BCRC 11652 / CCM 1803 / JCM 6124 / NCDO 523 / NBRC 100496 / NCIMB 8023 / NCTC 12954 / NRRL B-1118 / 37Y)).